The following is a 381-amino-acid chain: Queuine tRNA-ribosyltransferase (381 aa).

The active-site Proton acceptor is the D96. Substrate is bound by residues 96-100, D150, Q193, and G220; that span reads DSGGF. The RNA binding stretch occupies residues 251–257; that stretch reads GVGSPDS. Residue D270 is the Nucleophile of the active site. The RNA binding; important for wobble base 34 recognition stretch occupies residues 275-279; sequence TRIAR. Residues C308, C310, C313, and H339 each contribute to the Zn(2+) site.

It belongs to the queuine tRNA-ribosyltransferase family. In terms of assembly, homodimer. Within each dimer, one monomer is responsible for RNA recognition and catalysis, while the other monomer binds to the replacement base PreQ1. Requires Zn(2+) as cofactor.

It carries out the reaction 7-aminomethyl-7-carbaguanine + guanosine(34) in tRNA = 7-aminomethyl-7-carbaguanosine(34) in tRNA + guanine. Its pathway is tRNA modification; tRNA-queuosine biosynthesis. Its function is as follows. Catalyzes the base-exchange of a guanine (G) residue with the queuine precursor 7-aminomethyl-7-deazaguanine (PreQ1) at position 34 (anticodon wobble position) in tRNAs with GU(N) anticodons (tRNA-Asp, -Asn, -His and -Tyr). Catalysis occurs through a double-displacement mechanism. The nucleophile active site attacks the C1' of nucleotide 34 to detach the guanine base from the RNA, forming a covalent enzyme-RNA intermediate. The proton acceptor active site deprotonates the incoming PreQ1, allowing a nucleophilic attack on the C1' of the ribose to form the product. After dissociation, two additional enzymatic reactions on the tRNA convert PreQ1 to queuine (Q), resulting in the hypermodified nucleoside queuosine (7-(((4,5-cis-dihydroxy-2-cyclopenten-1-yl)amino)methyl)-7-deazaguanosine). The protein is Queuine tRNA-ribosyltransferase of Bacillus licheniformis (strain ATCC 14580 / DSM 13 / JCM 2505 / CCUG 7422 / NBRC 12200 / NCIMB 9375 / NCTC 10341 / NRRL NRS-1264 / Gibson 46).